The primary structure comprises 482 residues: Carbamoyl phosphate synthase large chain, N-terminal section (482 aa).

Residues 1–398 (MESIKKVMVF…ALQKAIRSLD (398 aa)) form a carboxyphosphate synthetic domain region. Arg126, Arg166, Gly172, Gly173, Glu205, Val207, Glu212, Gly238, Ile239, His240, Gln281, and Glu295 together coordinate ATP. Residues 130-324 (AEAMAEINEP…IARIAAKIAI (195 aa)) form the ATP-grasp domain. 3 residues coordinate Mg(2+): Gln281, Glu295, and Asn297. Mn(2+) contacts are provided by Gln281, Glu295, and Asn297.

It belongs to the CarB family. Composed of two chains; the small (or glutamine) chain promotes the hydrolysis of glutamine to ammonia, which is used by the large (or ammonia) chain to synthesize carbamoyl phosphate. Tetramer of heterodimers (alpha,beta)4. Requires Mg(2+) as cofactor. It depends on Mn(2+) as a cofactor.

It carries out the reaction hydrogencarbonate + L-glutamine + 2 ATP + H2O = carbamoyl phosphate + L-glutamate + 2 ADP + phosphate + 2 H(+). The catalysed reaction is hydrogencarbonate + NH4(+) + 2 ATP = carbamoyl phosphate + 2 ADP + phosphate + 2 H(+). The protein operates within amino-acid biosynthesis; L-arginine biosynthesis; carbamoyl phosphate from bicarbonate: step 1/1. Its pathway is pyrimidine metabolism; UMP biosynthesis via de novo pathway; (S)-dihydroorotate from bicarbonate: step 1/3. Functionally, large subunit of the glutamine-dependent carbamoyl phosphate synthetase (CPSase). CPSase catalyzes the formation of carbamoyl phosphate from the ammonia moiety of glutamine, carbonate, and phosphate donated by ATP, constituting the first step of 2 biosynthetic pathways, one leading to arginine and/or urea and the other to pyrimidine nucleotides. The large subunit (synthetase) binds the substrates ammonia (free or transferred from glutamine from the small subunit), hydrogencarbonate and ATP and carries out an ATP-coupled ligase reaction, activating hydrogencarbonate by forming carboxy phosphate which reacts with ammonia to form carbamoyl phosphate. This chain is Carbamoyl phosphate synthase large chain, N-terminal section (carB1), found in Methanocaldococcus jannaschii (strain ATCC 43067 / DSM 2661 / JAL-1 / JCM 10045 / NBRC 100440) (Methanococcus jannaschii).